The sequence spans 185 residues: MALHLTLARPYAKAAFADGQKANQLEAWLAVFTAFSKIIKNKEVARQIINPKFSDKEIKTLLFDLIQTIEPESTKQLKDKIDHFLQLLIDEKRLMILPDIALVYQQLLNKYQGIIEASVTYVFPLNDEHRQQIQKQLEKRFNAEVKLKMIKDESLLGGVIIRAGNWVMDGSIKGKLTRLAENLKG.

This sequence belongs to the ATPase delta chain family. F-type ATPases have 2 components, F(1) - the catalytic core - and F(0) - the membrane proton channel. F(1) has five subunits: alpha(3), beta(3), gamma(1), delta(1), epsilon(1). F(0) has three main subunits: a(1), b(2) and c(10-14). The alpha and beta chains form an alternating ring which encloses part of the gamma chain. F(1) is attached to F(0) by a central stalk formed by the gamma and epsilon chains, while a peripheral stalk is formed by the delta and b chains.

Its subcellular location is the cell inner membrane. In terms of biological role, f(1)F(0) ATP synthase produces ATP from ADP in the presence of a proton or sodium gradient. F-type ATPases consist of two structural domains, F(1) containing the extramembraneous catalytic core and F(0) containing the membrane proton channel, linked together by a central stalk and a peripheral stalk. During catalysis, ATP synthesis in the catalytic domain of F(1) is coupled via a rotary mechanism of the central stalk subunits to proton translocation. This protein is part of the stalk that links CF(0) to CF(1). It either transmits conformational changes from CF(0) to CF(1) or is implicated in proton conduction. In Coxiella burnetii (strain CbuG_Q212) (Coxiella burnetii (strain Q212)), this protein is ATP synthase subunit delta.